The chain runs to 316 residues: HPr kinase/phosphorylase (316 aa).

Catalysis depends on residues His-143 and Lys-164. 158-165 (GEAGSGKS) contacts ATP. Position 165 (Ser-165) interacts with Mg(2+). The active-site Proton acceptor; for phosphorylation activity. Proton donor; for dephosphorylation activity is the Asp-182. An important for the catalytic mechanism of both phosphorylation and dephosphorylation region spans residues 206–215 (LEVRGLGVLN). Glu-207 is a Mg(2+) binding site. Arg-251 is a catalytic residue. Residues 272 to 277 (PVMPGR) form an important for the catalytic mechanism of dephosphorylation region.

This sequence belongs to the HPrK/P family. In terms of assembly, homohexamer. Mg(2+) serves as cofactor.

The catalysed reaction is [HPr protein]-L-serine + ATP = [HPr protein]-O-phospho-L-serine + ADP + H(+). It carries out the reaction [HPr protein]-O-phospho-L-serine + phosphate + H(+) = [HPr protein]-L-serine + diphosphate. Functionally, catalyzes the ATP- as well as the pyrophosphate-dependent phosphorylation of a specific serine residue in HPr, a phosphocarrier protein of the phosphoenolpyruvate-dependent sugar phosphotransferase system (PTS). HprK/P also catalyzes the pyrophosphate-producing, inorganic phosphate-dependent dephosphorylation (phosphorolysis) of seryl-phosphorylated HPr (P-Ser-HPr). This chain is HPr kinase/phosphorylase, found in Xanthomonas campestris pv. campestris (strain 8004).